The sequence spans 328 residues: L-asparaginase (328 aa).

Residues 1 to 320 enclose the Asparaginase/glutaminase domain; that stretch reads MKLLVLGTGG…EEIRKIMERN (320 aa). Threonine 11 serves as the catalytic Nucleophile; O-isoaspartyl threonine intermediate. Threonine 11, aspartate 53, serine 54, threonine 85, and aspartate 86 together coordinate L-aspartate. Active-site charge relay system residues include threonine 85, aspartate 86, lysine 156, and tyrosine 274.

Belongs to the asparaginase 1 family. As to quaternary structure, homodimer.

The enzyme catalyses L-asparagine + H2O = L-aspartate + NH4(+). Its activity is regulated as follows. Chohan et al. found that divalent metal ions and EDTA do not have any significant effect on enzyme activity, indicating that activity is independent of metal ions. In another study, Hong et al. showed that activity is enhanced by Mg(2+), significantly inhibited by Co(2+) and Ni(2+), and moderately inhibited by Ca(2+), Cu(2+) and EDTA. Unfolding studies suggest that urea cannot induce complete unfolding and inactivation of the enzyme even at a concentration 8 M. However, in the presence of 4 M guanidine hydrochloride, the enzyme structure is unfolded with complete loss of enzyme activity. In terms of biological role, catalyzes the hydrolysis of L-asparagine into L-aspartate and ammonia. Also displays D-asparaginase activity, which is about 50% of the L-asparaginase activity. Does not exhibit glutaminase activity. The chain is L-asparaginase from Thermococcus kodakarensis (strain ATCC BAA-918 / JCM 12380 / KOD1) (Pyrococcus kodakaraensis (strain KOD1)).